Here is a 471-residue protein sequence, read N- to C-terminus: Sulfate adenylyltransferase subunit 1 (471 aa).

The tr-type G domain occupies 24-240 (KSLLRFLTCG…ESADVERELE (217 aa)). A G1 region spans residues 33-40 (GSVDDGKS). 33–40 (GSVDDGKS) lines the GTP pocket. Residues 91 to 95 (GITID) are G2. The tract at residues 112 to 115 (DTPG) is G3. Residues 112-116 (DTPGH) and 167-170 (NKMD) each bind GTP. Residues 167 to 170 (NKMD) are G4. Positions 204 to 206 (SAL) are G5.

It belongs to the TRAFAC class translation factor GTPase superfamily. Classic translation factor GTPase family. CysN/NodQ subfamily. Heterodimer composed of CysD, the smaller subunit, and CysN.

The catalysed reaction is sulfate + ATP + H(+) = adenosine 5'-phosphosulfate + diphosphate. Its pathway is sulfur metabolism; hydrogen sulfide biosynthesis; sulfite from sulfate: step 1/3. In terms of biological role, with CysD forms the ATP sulfurylase (ATPS) that catalyzes the adenylation of sulfate producing adenosine 5'-phosphosulfate (APS) and diphosphate, the first enzymatic step in sulfur assimilation pathway. APS synthesis involves the formation of a high-energy phosphoric-sulfuric acid anhydride bond driven by GTP hydrolysis by CysN coupled to ATP hydrolysis by CysD. The sequence is that of Sulfate adenylyltransferase subunit 1 from Aeromonas salmonicida (strain A449).